An 82-amino-acid polypeptide reads, in one-letter code: Small ribosomal subunit protein bS18 (82 aa).

It belongs to the bacterial ribosomal protein bS18 family. In terms of assembly, part of the 30S ribosomal subunit. Forms a tight heterodimer with protein bS6.

Its function is as follows. Binds as a heterodimer with protein bS6 to the central domain of the 16S rRNA, where it helps stabilize the platform of the 30S subunit. The protein is Small ribosomal subunit protein bS18 of Bartonella bacilliformis (strain ATCC 35685 / KC583 / Herrer 020/F12,63).